The chain runs to 355 residues: Uroporphyrinogen decarboxylase (355 aa).

Substrate is bound by residues 27 to 31 (RQAGR), Asp-78, Tyr-155, Thr-210, and His-328.

It belongs to the uroporphyrinogen decarboxylase family. In terms of assembly, homodimer.

It localises to the cytoplasm. The enzyme catalyses uroporphyrinogen III + 4 H(+) = coproporphyrinogen III + 4 CO2. The protein operates within porphyrin-containing compound metabolism; protoporphyrin-IX biosynthesis; coproporphyrinogen-III from 5-aminolevulinate: step 4/4. Catalyzes the decarboxylation of four acetate groups of uroporphyrinogen-III to yield coproporphyrinogen-III. This chain is Uroporphyrinogen decarboxylase, found in Pseudomonas fluorescens (strain Pf0-1).